Reading from the N-terminus, the 61-residue chain is Metallothionein-1L (61 aa).

Positions 1–29 (MDPNCSCATGGSCSCASSCKCKECKCTSC) are beta. Positions 5, 7, 13, 15, 19, 21, 24, 26, 29, 33, 34, 36, 37, 41, 44, 48, 50, 57, 59, and 60 each coordinate a divalent metal cation. An alpha region spans residues 30–61 (KKSCCSCCPMGCAKCAQGCVCKGASEKCSCCA).

The protein belongs to the metallothionein superfamily. Type 1 family. In terms of assembly, monomer. As to expression, expressed in reticulocytes.

Its function is as follows. Metallothioneins have a high content of cysteine residues that bind various heavy metals; these proteins are transcriptionally regulated by both heavy metals and glucocorticoids. This is Metallothionein-1L (MT1L) from Homo sapiens (Human).